We begin with the raw amino-acid sequence, 421 residues long: GTPase Obg (421 aa).

The Obg domain maps to 1–158 (MFIDVAKIEL…KTIKLELKLL (158 aa)). The disordered stretch occupies residues 21–40 (AFRREKYEPSGGPAGGDGGD). In terms of domain architecture, OBG-type G spans 159-328 (ADVGLIGLPN…LMYLIADTLD (170 aa)). Residues 165–172 (GLPNVGKS), 190–194 (FTTLE), 211–214 (DIPG), 281–284 (NKTD), and 309–311 (SAA) each bind GTP. 2 residues coordinate Mg(2+): Ser-172 and Thr-192. One can recognise an OCT domain in the interval 344–421 (FEEEKEPDFK…IGDVEFDFYE (78 aa)).

It belongs to the TRAFAC class OBG-HflX-like GTPase superfamily. OBG GTPase family. In terms of assembly, monomer. Mg(2+) is required as a cofactor.

It localises to the cytoplasm. Its function is as follows. An essential GTPase which binds GTP, GDP and possibly (p)ppGpp with moderate affinity, with high nucleotide exchange rates and a fairly low GTP hydrolysis rate. Plays a role in control of the cell cycle, stress response, ribosome biogenesis and in those bacteria that undergo differentiation, in morphogenesis control. This chain is GTPase Obg, found in Finegoldia magna (strain ATCC 29328 / DSM 20472 / WAL 2508) (Peptostreptococcus magnus).